Consider the following 28-residue polypeptide: Cruzioseptin-4 (28 aa).

Glutamate 25 carries the post-translational modification Glutamic acid 1-amide. Positions 27–28 (EH) are excised as a propeptide.

Expressed by the skin glands.

Its subcellular location is the secreted. In terms of biological role, has antimicrobial activity. The polypeptide is Cruzioseptin-4 (Cruziohyla calcarifer (Splendid leaf frog)).